Reading from the N-terminus, the 340-residue chain is tRNA N6-adenosine threonylcarbamoyltransferase (340 aa).

Fe cation is bound by residues His113 and His117. Substrate contacts are provided by residues 135 to 139 (LVSGG), Asp169, Gly182, Asp186, and Asn274. Position 302 (Asp302) interacts with Fe cation.

This sequence belongs to the KAE1 / TsaD family. Requires Fe(2+) as cofactor.

The protein localises to the cytoplasm. It carries out the reaction L-threonylcarbamoyladenylate + adenosine(37) in tRNA = N(6)-L-threonylcarbamoyladenosine(37) in tRNA + AMP + H(+). Required for the formation of a threonylcarbamoyl group on adenosine at position 37 (t(6)A37) in tRNAs that read codons beginning with adenine. Is involved in the transfer of the threonylcarbamoyl moiety of threonylcarbamoyl-AMP (TC-AMP) to the N6 group of A37, together with TsaE and TsaB. TsaD likely plays a direct catalytic role in this reaction. This chain is tRNA N6-adenosine threonylcarbamoyltransferase, found in Mycolicibacterium smegmatis (strain ATCC 700084 / mc(2)155) (Mycobacterium smegmatis).